Here is a 31-residue protein sequence, read N- to C-terminus: Photosystem II reaction center protein Psb30 (31 aa).

The chain crosses the membrane as a helical span at residues 5–25 (IQLTSLLLIVIAGPLVIALLF).

The protein belongs to the Psb30/Ycf12 family. PSII is composed of 1 copy each of membrane proteins PsbA, PsbB, PsbC, PsbD, PsbE, PsbF, PsbH, PsbI, PsbJ, PsbK, PsbL, PsbM, PsbT, PsbX, PsbY, PsbZ, Psb30/Ycf12, peripheral proteins of the oxygen-evolving complex and a large number of cofactors. It forms dimeric complexes.

Its subcellular location is the plastid. It localises to the chloroplast thylakoid membrane. A core subunit of photosystem II (PSII), probably helps stabilize the reaction center. This chain is Photosystem II reaction center protein Psb30, found in Phacus acuminatus.